We begin with the raw amino-acid sequence, 553 residues long: MEPIWELVEPWGLGLDDLQYFGEYTAKVKQHAIERLREQAENREQNLVLVTGMTPTPKGEGKTVTTVGLGQTLNHVGEEAMIAIREPSLGPVFGVKGGAAGGGRSQVLPMEDINLHFTGDLHALTSAHNLIAAMLDAKISQGDDLNIDINNVSWPRAIDMNDRALRETVVGLGGKTGGTPREDSFILTAASELMAVLCLASDIGDLKERVSRIIVAYDEDGDPVTVEDIEATGPATMLLRDAIKPNVVQTIEGTPALVHGGPFANIAHGTNSLVADKTAFGMGDYLVTEAGFGSDLGAEKFMDVVCRKGDMTPNAVVLVASVRALKYHGLNQWPVDYDEIGEAGVEAVEAGFSNLDKHARNLQKFGVPVVVSVNRFPDDTDEEVQAVLDHCREDLGVRAAESNVFSDGSEGGVDLAENVIEATEESNEEDFRMLYDDDDSIKEKIHTVATEIYGADDVKYTGGALDDIEQMNDLDFDDYPVVMSKTFHSLSDDASQKGAPEGWELEISEVYPSAGAGFLVALTADALTMPGLPARPAAADMDIDGDGNISGLF.

56-63 (TPKGEGKT) serves as a coordination point for ATP.

Belongs to the formate--tetrahydrofolate ligase family.

The enzyme catalyses (6S)-5,6,7,8-tetrahydrofolate + formate + ATP = (6R)-10-formyltetrahydrofolate + ADP + phosphate. Its pathway is one-carbon metabolism; tetrahydrofolate interconversion. The sequence is that of Formate--tetrahydrofolate ligase from Haloarcula marismortui (strain ATCC 43049 / DSM 3752 / JCM 8966 / VKM B-1809) (Halobacterium marismortui).